The chain runs to 357 residues: 3-isopropylmalate dehydrogenase (357 aa).

Residue 75 to 88 coordinates NAD(+); that stretch reads GPKWEHLPPAEQPE. Substrate is bound by residues Arg-96, Arg-106, Arg-135, and Asp-224. Mg(2+) contacts are provided by Asp-224, Asp-248, and Asp-252. An NAD(+)-binding site is contributed by 282–294; it reads GSAPDIAGQGIAN.

It belongs to the isocitrate and isopropylmalate dehydrogenases family. LeuB type 1 subfamily. As to quaternary structure, homodimer. Mg(2+) serves as cofactor. Mn(2+) is required as a cofactor.

The protein localises to the cytoplasm. The catalysed reaction is (2R,3S)-3-isopropylmalate + NAD(+) = 4-methyl-2-oxopentanoate + CO2 + NADH. It participates in amino-acid biosynthesis; L-leucine biosynthesis; L-leucine from 3-methyl-2-oxobutanoate: step 3/4. In terms of biological role, catalyzes the oxidation of 3-carboxy-2-hydroxy-4-methylpentanoate (3-isopropylmalate) to 3-carboxy-4-methyl-2-oxopentanoate. The product decarboxylates to 4-methyl-2 oxopentanoate. The sequence is that of 3-isopropylmalate dehydrogenase from Desulfotalea psychrophila (strain LSv54 / DSM 12343).